The chain runs to 292 residues: 33 kDa chaperonin (292 aa).

Cystine bridges form between cysteine 238/cysteine 240 and cysteine 271/cysteine 274.

It belongs to the HSP33 family. Under oxidizing conditions two disulfide bonds are formed involving the reactive cysteines. Under reducing conditions zinc is bound to the reactive cysteines and the protein is inactive.

Its subcellular location is the cytoplasm. Its function is as follows. Redox regulated molecular chaperone. Protects both thermally unfolding and oxidatively damaged proteins from irreversible aggregation. Plays an important role in the bacterial defense system toward oxidative stress. This chain is 33 kDa chaperonin, found in Alkaliphilus metalliredigens (strain QYMF).